A 280-amino-acid chain; its full sequence is Energy-coupling factor transporter ATP-binding protein EcfA2 (280 aa).

The ABC transporter domain occupies 3-245; it reads IEFKNVSYTY…VELLESKQLG (243 aa). 40 to 47 lines the ATP pocket; sequence GHTGSGKS.

This sequence belongs to the ABC transporter superfamily. Energy-coupling factor EcfA family. In terms of assembly, forms a stable energy-coupling factor (ECF) transporter complex composed of 2 membrane-embedded substrate-binding proteins (S component), 2 ATP-binding proteins (A component) and 2 transmembrane proteins (T component).

The protein resides in the cell membrane. Functionally, ATP-binding (A) component of a common energy-coupling factor (ECF) ABC-transporter complex. Unlike classic ABC transporters this ECF transporter provides the energy necessary to transport a number of different substrates. The chain is Energy-coupling factor transporter ATP-binding protein EcfA2 from Streptococcus agalactiae serotype Ia (strain ATCC 27591 / A909 / CDC SS700).